A 293-amino-acid polypeptide reads, in one-letter code: ESX-3 secretion-associated protein EspG3 (293 aa).

It belongs to the EspG family.

It localises to the cytoplasm. This Mycolicibacterium smegmatis (strain ATCC 700084 / mc(2)155) (Mycobacterium smegmatis) protein is ESX-3 secretion-associated protein EspG3.